The primary structure comprises 750 residues: 1,4-alpha-glucan branching enzyme GlgB (750 aa).

Asp-425 acts as the Nucleophile in catalysis. Residue Glu-478 is the Proton donor of the active site.

It belongs to the glycosyl hydrolase 13 family. GlgB subfamily. In terms of assembly, monomer.

The catalysed reaction is Transfers a segment of a (1-&gt;4)-alpha-D-glucan chain to a primary hydroxy group in a similar glucan chain.. Its pathway is glycan biosynthesis; glycogen biosynthesis. In terms of biological role, catalyzes the formation of the alpha-1,6-glucosidic linkages in glycogen by scission of a 1,4-alpha-linked oligosaccharide from growing alpha-1,4-glucan chains and the subsequent attachment of the oligosaccharide to the alpha-1,6 position. The chain is 1,4-alpha-glucan branching enzyme GlgB from Cupriavidus pinatubonensis (strain JMP 134 / LMG 1197) (Cupriavidus necator (strain JMP 134)).